The sequence spans 141 residues: Large ribosomal subunit protein uL11 (141 aa).

Belongs to the universal ribosomal protein uL11 family. As to quaternary structure, part of the ribosomal stalk of the 50S ribosomal subunit. Interacts with L10 and the large rRNA to form the base of the stalk. L10 forms an elongated spine to which L12 dimers bind in a sequential fashion forming a multimeric L10(L12)X complex. In terms of processing, one or more lysine residues are methylated.

Functionally, forms part of the ribosomal stalk which helps the ribosome interact with GTP-bound translation factors. This chain is Large ribosomal subunit protein uL11, found in Clostridium kluyveri (strain ATCC 8527 / DSM 555 / NBRC 12016 / NCIMB 10680 / K1).